Here is a 161-residue protein sequence, read N- to C-terminus: Large ribosomal subunit protein uL10 (161 aa).

It belongs to the universal ribosomal protein uL10 family. In terms of assembly, part of the ribosomal stalk of the 50S ribosomal subunit. The N-terminus interacts with L11 and the large rRNA to form the base of the stalk. The C-terminus forms an elongated spine to which L12 dimers bind in a sequential fashion forming a multimeric L10(L12)X complex.

Forms part of the ribosomal stalk, playing a central role in the interaction of the ribosome with GTP-bound translation factors. The sequence is that of Large ribosomal subunit protein uL10 from Campylobacter fetus subsp. fetus (strain 82-40).